The primary structure comprises 623 residues: Arginine decarboxylase 2 (623 aa).

Lys-109 carries the N6-(pyridoxal phosphate)lysine modification. 295-305 (LDCGGGLGVDY) contacts substrate.

It belongs to the Orn/Lys/Arg decarboxylase class-II family. SpeA subfamily. Requires pyridoxal 5'-phosphate as cofactor. The cofactor is Mg(2+). Expressed in stems (at protein level).

It catalyses the reaction L-arginine + H(+) = agmatine + CO2. The protein operates within amine and polyamine biosynthesis; agmatine biosynthesis; agmatine from L-arginine: step 1/1. This Oryza sativa subsp. japonica (Rice) protein is Arginine decarboxylase 2 (ADC2).